We begin with the raw amino-acid sequence, 356 residues long: Protein RecA (356 aa).

69–76 (GPESSGKT) contacts ATP.

It belongs to the RecA family.

It localises to the cytoplasm. In terms of biological role, can catalyze the hydrolysis of ATP in the presence of single-stranded DNA, the ATP-dependent uptake of single-stranded DNA by duplex DNA, and the ATP-dependent hybridization of homologous single-stranded DNAs. It interacts with LexA causing its activation and leading to its autocatalytic cleavage. This Gloeothece citriformis (strain PCC 7424) (Cyanothece sp. (strain PCC 7424)) protein is Protein RecA.